The primary structure comprises 732 residues: Catalase-peroxidase (732 aa).

Residues 1 to 23 (MSEQSRCPVTGRTADSPATGSGL) form a disordered region. A cross-link (tryptophyl-tyrosyl-methioninium (Trp-Tyr) (with M-246)) is located at residues 97-220 (WHSAGTYRTS…LAAVQMGLIY (124 aa)). The active-site Proton acceptor is the H98. A cross-link (tryptophyl-tyrosyl-methioninium (Tyr-Met) (with W-97)) is located at residues 220–246 (YVNPEGPDGKPDPVAAGRDIRETFARM). H261 contacts heme b.

Belongs to the peroxidase family. Peroxidase/catalase subfamily. In terms of assembly, homodimer or homotetramer. It depends on heme b as a cofactor. Formation of the three residue Trp-Tyr-Met cross-link is important for the catalase, but not the peroxidase activity of the enzyme.

The enzyme catalyses H2O2 + AH2 = A + 2 H2O. It catalyses the reaction 2 H2O2 = O2 + 2 H2O. Bifunctional enzyme with both catalase and broad-spectrum peroxidase activity. The chain is Catalase-peroxidase from Prosthecochloris aestuarii (strain DSM 271 / SK 413).